The following is a 277-amino-acid chain: Large ribosomal subunit protein uL2 (277 aa).

The segment at 219–277 (TVRGSVMNPNDHPHGGGEGRSPIGHPSPRTPWGKPALGYKTRKNKKYSDRFIVKRRHDK) is disordered.

This sequence belongs to the universal ribosomal protein uL2 family. As to quaternary structure, part of the 50S ribosomal subunit. Forms a bridge to the 30S subunit in the 70S ribosome.

In terms of biological role, one of the primary rRNA binding proteins. Required for association of the 30S and 50S subunits to form the 70S ribosome, for tRNA binding and peptide bond formation. It has been suggested to have peptidyltransferase activity; this is somewhat controversial. Makes several contacts with the 16S rRNA in the 70S ribosome. The sequence is that of Large ribosomal subunit protein uL2 from Clostridium botulinum (strain ATCC 19397 / Type A).